A 477-amino-acid chain; its full sequence is P3 protein (477 aa).

The segment at 1–21 (MVFRSGEGHSLQWPGPEGGTG) is disordered. 8 helical membrane passes run 225–245 (PMLLGLLGQFLVMPFYAFLMA), 253–273 (ALALGLIITCSSPGGGGSYLF), 281–301 (VTLAISMTFISTVAATGFLPL), 320–340 (VSKILGTLLFIAIPIAAGVVI), 361–381 (VLLLGGLFLAYRMGVFILAGV), 383–403 (LPIVLVGFTVPLVGLLVGYGL), 417–437 (VSIEVGVQNSLLALAMLQLSL), and 450–470 (FLVALSGTSEMLALVIGHFIY).

This sequence belongs to the bile acid:sodium symporter (BASS) (TC 2.A.28) family.

Its subcellular location is the membrane. In terms of biological role, the ubiquitous expression and the conservation of the sequence in distant animal species suggest that the gene codes for a protein with housekeeping functions. This chain is P3 protein (SLC10A3), found in Bos taurus (Bovine).